Here is a 627-residue protein sequence, read N- to C-terminus: Sister chromatid cohesion 1 protein 1 (627 aa).

Disordered regions lie at residues 211-294, 395-416, and 461-510; these read GDDE…TATS, MHNHHQTDHHERSDTSSQNLDS, and GDDV…VAEE. Composition is skewed to basic and acidic residues over residues 254-263, 272-282, and 395-408; these read EQQENRRDGF, IPDKEEHDRPQ, and MHNHHQTDHHERSD. Residues 467 to 487 show a composition bias toward polar residues; sequence MPSTPSARGAASINNIEISSK.

Belongs to the rad21 family. In terms of assembly, component of the cohesin complex. In terms of tissue distribution, isoform 2 is expressed at low levels in buds, leaves and roots, whereas expression of isoform 1 is confined to buds.

The protein localises to the nucleus. In terms of biological role, involved in chromosome condensation, pairing and segregation during meiosis. Responsible for cohesion between replicated sister chromatids. The chain is Sister chromatid cohesion 1 protein 1 (SYN1) from Arabidopsis thaliana (Mouse-ear cress).